Here is a 320-residue protein sequence, read N- to C-terminus: MAVYTDVAEGELGAFLKHYPVGDLLSYKGIAEGTENSNFLLHTSSGSYILTLYEKRVEKADLPFFLGLMGHLANKGVSCPLPVTAHDGSVIGTLAGRPAVIITFLEGLSLRRPTATHCAEVGKALAALHLAGADFPMTRPNALAIDGWRKLWNAARDRADEVEPGLAAEVDADFADFERNWPRGLPAGIIHADLFPDNVFFLGEKLSGLIDFYFACDDLYAYDVATCLNAWCFEKDFSFNLTKGKALLAGYQSVRPLSGEEKAALPMLSRGSALRFMLTRLYDWLTVSDGGLVMKRDPTEYIRRMRFHRAIKSASEYGLA.

The protein belongs to the pseudomonas-type ThrB family.

It carries out the reaction L-homoserine + ATP = O-phospho-L-homoserine + ADP + H(+). It functions in the pathway amino-acid biosynthesis; L-threonine biosynthesis; L-threonine from L-aspartate: step 4/5. The polypeptide is Homoserine kinase (Mesorhizobium japonicum (strain LMG 29417 / CECT 9101 / MAFF 303099) (Mesorhizobium loti (strain MAFF 303099))).